The chain runs to 203 residues: Large ribosomal subunit protein bL25 (203 aa).

This sequence belongs to the bacterial ribosomal protein bL25 family. CTC subfamily. In terms of assembly, part of the 50S ribosomal subunit; part of the 5S rRNA/L5/L18/L25 subcomplex. Contacts the 5S rRNA. Binds to the 5S rRNA independently of L5 and L18.

This is one of the proteins that binds to the 5S RNA in the ribosome where it forms part of the central protuberance. This is Large ribosomal subunit protein bL25 from Rickettsia peacockii (strain Rustic).